The following is a 562-amino-acid chain: NAD-dependent histone deacetylase SIR2 (562 aa).

A disordered region spans residues M1 to G67. The span at S11–T25 shows a compositional bias: polar residues. The span at Q26 to D36 shows a compositional bias: basic and acidic residues. In terms of domain architecture, Deacetylase sirtuin-type spans R237–T527. NAD(+) contacts are provided by residues G262–Y281 and Q344–D347. H364 (proton acceptor) is an active-site residue. Positions 372, 375, 396, and 399 each coordinate Zn(2+). NAD(+) is bound by residues G471–S473, N496–D498, and C513.

Belongs to the sirtuin family. Class I subfamily. Homomultimer. Forms a complex with SIR3 and SIR4. Component of the RENT complex, at least composed of SIR2, CDC14 and NET1. The RENT complex interacts with FOB1. Interacts with ESC8. Interacts with and ZDS2. Interacts with MCM10. Interacts with SLX5. Interacts with NSI1. It depends on Zn(2+) as a cofactor.

It is found in the nucleus. The protein localises to the nucleolus. The enzyme catalyses N(6)-acetyl-L-lysyl-[protein] + NAD(+) + H2O = 2''-O-acetyl-ADP-D-ribose + nicotinamide + L-lysyl-[protein]. Its activity is increased by calorie restriction, which slows the pace of aging and increases maximum lifespan. Activated by resveratrol (3,5,4'-trihydroxy-trans-stilbene), which is found in red wine. In terms of biological role, NAD-dependent deacetylase, which participates in a wide range of cellular events including chromosome silencing, chromosome segregation, DNA recombination and the determination of life span. Involved in transcriptional repression of the silent mating-type loci HML and HMR and telomeric silencing via its association with SIR3 and SIR4. Plays a central role in ribosomal DNA (rDNA) silencing via its association with the RENT complex, preventing hyperrecombination, and repressing transcription from foreign promoters, which contributes to extending life span. Probably represses transcription via the formation of heterochromatin structure, which involves the compaction of chromatin fiber into a more condensed form, although this complex in at least one case can still bind euchromatic levels of positive transcription regulators. Although it displays some NAD-dependent histone deacetylase activity on histone H3K9Ac and H3K14Ac and histone H4K16Ac in vitro, such activity is unclear in vivo and may not be essential. The protein is NAD-dependent histone deacetylase SIR2 (SIR2) of Saccharomyces cerevisiae (strain ATCC 204508 / S288c) (Baker's yeast).